Here is a 456-residue protein sequence, read N- to C-terminus: Bifunctional protein GlmU (456 aa).

A pyrophosphorylase region spans residues 1-229 (MLNNAMSVVI…LSEVEGVNNR (229 aa)). UDP-N-acetyl-alpha-D-glucosamine is bound by residues 11-14 (LAAG), Lys25, Gln76, 81-82 (GT), 103-105 (YGD), Gly140, Glu154, Asn169, and Asn227. Asp105 lines the Mg(2+) pocket. Asn227 is a Mg(2+) binding site. The tract at residues 230-250 (LQLSRLERVYQSEQAEKLLLA) is linker. The segment at 251–456 (GVMLRDPARF…EGWRRPVKKK (206 aa)) is N-acetyltransferase. UDP-N-acetyl-alpha-D-glucosamine is bound by residues Arg333 and Lys351. Residue His363 is the Proton acceptor of the active site. Tyr366 and Asn377 together coordinate UDP-N-acetyl-alpha-D-glucosamine. Acetyl-CoA-binding positions include Ala380, 386–387 (NY), Ser405, Ala423, and Arg440.

This sequence in the N-terminal section; belongs to the N-acetylglucosamine-1-phosphate uridyltransferase family. In the C-terminal section; belongs to the transferase hexapeptide repeat family. Homotrimer. It depends on Mg(2+) as a cofactor.

The protein resides in the cytoplasm. The catalysed reaction is alpha-D-glucosamine 1-phosphate + acetyl-CoA = N-acetyl-alpha-D-glucosamine 1-phosphate + CoA + H(+). It catalyses the reaction N-acetyl-alpha-D-glucosamine 1-phosphate + UTP + H(+) = UDP-N-acetyl-alpha-D-glucosamine + diphosphate. It participates in nucleotide-sugar biosynthesis; UDP-N-acetyl-alpha-D-glucosamine biosynthesis; N-acetyl-alpha-D-glucosamine 1-phosphate from alpha-D-glucosamine 6-phosphate (route II): step 2/2. It functions in the pathway nucleotide-sugar biosynthesis; UDP-N-acetyl-alpha-D-glucosamine biosynthesis; UDP-N-acetyl-alpha-D-glucosamine from N-acetyl-alpha-D-glucosamine 1-phosphate: step 1/1. Its pathway is bacterial outer membrane biogenesis; LPS lipid A biosynthesis. Its function is as follows. Catalyzes the last two sequential reactions in the de novo biosynthetic pathway for UDP-N-acetylglucosamine (UDP-GlcNAc). The C-terminal domain catalyzes the transfer of acetyl group from acetyl coenzyme A to glucosamine-1-phosphate (GlcN-1-P) to produce N-acetylglucosamine-1-phosphate (GlcNAc-1-P), which is converted into UDP-GlcNAc by the transfer of uridine 5-monophosphate (from uridine 5-triphosphate), a reaction catalyzed by the N-terminal domain. This chain is Bifunctional protein GlmU, found in Shigella boydii serotype 18 (strain CDC 3083-94 / BS512).